The chain runs to 187 residues: 1,6-anhydro-N-acetylmuramyl-L-alanine amidase AmpD (187 aa).

The N-acetylmuramoyl-L-alanine amidase domain occupies 30–167 (LLVVHNISLP…APERKTDPGP (138 aa)). Residue H34 coordinates Zn(2+). Catalysis depends on E116, which acts as the Proton acceptor. Zn(2+) contacts are provided by H154 and D164.

The protein belongs to the N-acetylmuramoyl-L-alanine amidase 2 family. Zn(2+) is required as a cofactor.

The protein resides in the cytoplasm. It carries out the reaction Hydrolyzes the link between N-acetylmuramoyl residues and L-amino acid residues in certain cell-wall glycopeptides.. Its activity is regulated as follows. Amidase activity is inhibited by metal chelators such as EDTA, dipicolinic acid or 1,10-phenanthroline. In terms of biological role, involved in cell wall peptidoglycan recycling. Specifically cleaves the amide bond between the lactyl group of N-acetylmuramic acid and the alpha-amino group of the L-alanine in degradation products containing an anhydro N-acetylmuramyl moiety. Is also involved in beta-lactamase induction. The chain is 1,6-anhydro-N-acetylmuramyl-L-alanine amidase AmpD from Citrobacter freundii.